A 295-amino-acid chain; its full sequence is MVHINELPENILLELFIHIPAPQLLRNCRLVCRLWRDLIDVVSLWKRKSLREGFFTKDRCEPVEDWKVFYILCSLQRNLLRNPCAEENLSSWRIDSNGGDRWKVETLPGSCGTSFPDNKVKKYFVTSFEMCLKSQMVDLKAEGYCEELMDTFRPDIVVKDWVAPRADCGCTYQLRVQLASADYIVLASFEPPPVTFQQWNDAKWQEISHTFSDYPPGVRHILFQHGGQDTQFWKGWYGPRVTNSSIIISHRTAKNPPPARTLPEETVVIGRRRRASDSNTHEGFFWQGLWQRLRR.

Residues 1–48 (MVHINELPENILLELFIHIPAPQLLRNCRLVCRLWRDLIDVVSLWKRK) enclose the F-box domain. The region spanning 69 to 250 (FYILCSLQRN…VTNSSIIISH (182 aa)) is the FBA domain. Phosphoserine is present on residues Ser249 and Ser276. Thr280 carries the phosphothreonine modification.

In terms of assembly, interacts with CHEK1 and CUL1. Part of a SCF (SKP1-cullin-F-box) protein ligase complex. Interacts with VCP. As to expression, present in liver and kidney (at protein level). Widely expressed.

The protein localises to the cytoplasm. It participates in protein modification; protein ubiquitination. In terms of biological role, substrate-recognition component of some SCF (SKP1-CUL1-F-box protein)-type E3 ubiquitin ligase complexes. Involved in DNA damage response by specifically recognizing activated CHEK1 (phosphorylated on 'Ser-345'), promoting its ubiquitination and degradation. Ubiquitination of CHEK1 is required to ensure that activated CHEK1 does not accumulate as cells progress through S phase, or when replication forks encounter transient impediments during normal DNA replication. Involved in endoplasmic reticulum-associated degradation pathway (ERAD) for misfolded lumenal proteins by recognizing and binding sugar chains on unfolded glycoproteins that are retrotranslocated into the cytosol and promoting their ubiquitination and subsequent degradation. Able to recognize and bind denatured glycoproteins, which are modified with not only high-mannose but also complex-type oligosaccharides. Also recognizes sulfated glycans. The chain is F-box only protein 6 (Fbxo6) from Mus musculus (Mouse).